A 332-amino-acid polypeptide reads, in one-letter code: Nucleoid-associated protein VVA0877 (332 aa).

It belongs to the YejK family.

The protein resides in the cytoplasm. Its subcellular location is the nucleoid. The sequence is that of Nucleoid-associated protein VVA0877 from Vibrio vulnificus (strain YJ016).